The sequence spans 623 residues: Kelch repeat and BTB domain-containing protein 2 (623 aa).

The BTB domain maps to 31 to 98 (TDIVLIVEGT…AYTGNLAMND (68 aa)). The region spanning 133–229 (CVRLLSFADL…IRIDALSEVT (97 aa)) is the BACK domain. At S300 the chain carries Phosphoserine. Kelch repeat units lie at residues 317–380 (DIYI…CCEG), 381–429 (YIYA…VVHD), 431–469 (IYVM…AFGD), 470–529 (KIFY…RAVV), and 535–581 (CVFM…DFRC).

As to quaternary structure, component of the BCR(KBTBD2) E3 ubiquitin ligase complex, at least composed of CUL3, KBTBD2 and RBX1. Interacts (via the BTB domain) with CUL3.

It participates in protein modification; protein ubiquitination. Substrate-specific adapter of a BCR (BTB-CUL3-RBX1) E3 ubiquitin ligase complex that acts as a regulator of the insulin signaling pathway, modulating insulin sensitivity by limiting PIK3R1/p85alpha abundance in adipocytes. Targets PIK3R1, the regulatory subunit of phosphatidylinositol 3-kinase (PI3K), for 'Lys-48'-linked polyubiquitination and proteasome-mediated degradation. The sequence is that of Kelch repeat and BTB domain-containing protein 2 from Homo sapiens (Human).